The primary structure comprises 148 residues: uncharacterized protein (148 aa).

The helical transmembrane segment at 1–21 (MLQNYAIVLGMAVAVAIWYFF) threads the bilayer. The tract at residues 27-61 (APPGPNPPKPDPPKPDPPKMHMPKKKPHWMDPHLT) is disordered.

Its subcellular location is the host membrane. This is an uncharacterized protein from Frog virus 3 (isolate Goorha) (FV-3).